Consider the following 169-residue polypeptide: uncharacterized protein (169 aa).

2 disordered regions span residues 32–53 (VSGP…APAP) and 148–169 (VSGS…AGGA).

This is an uncharacterized protein from Homo sapiens (Human).